The chain runs to 657 residues: L-type lectin-domain containing receptor kinase I.8 (657 aa).

The N-terminal stretch at 1–23 is a signal peptide; that stretch reads MAPGLDLIWMVISFLLLIHLSSQ. At 24 to 282 the chain is on the extracellular side; it reads QETGFSFNGF…QVPHPKMKTS (259 aa). The interval 25–257 is legume-lectin like; it reads ETGFSFNGFR…NHYILGWSFS (233 aa). N-linked (GlcNAc...) asparagine glycans are attached at residues N74, N124, N181, N204, and N225. Residues 283-303 traverse the membrane as a helical segment; that stretch reads LLLILLLIVLGIILLVLLVGA. Topologically, residues 304-657 are cytoplasmic; it reads YLYRRNKYAE…THSIQYGIGR (354 aa). In terms of domain architecture, Protein kinase spans 339 to 611; sequence FHKDGFLGKG…VQYLDRQVSL (273 aa). ATP contacts are provided by residues 345 to 353 and K366; that span reads LGKGGFGEV. The active-site Proton acceptor is the D462.

The protein in the C-terminal section; belongs to the protein kinase superfamily. Ser/Thr protein kinase family. It in the N-terminal section; belongs to the leguminous lectin family.

The protein localises to the cell membrane. The enzyme catalyses L-seryl-[protein] + ATP = O-phospho-L-seryl-[protein] + ADP + H(+). The catalysed reaction is L-threonyl-[protein] + ATP = O-phospho-L-threonyl-[protein] + ADP + H(+). Involved in resistance response to the pathogenic fungus Alternaria brassicicola. The chain is L-type lectin-domain containing receptor kinase I.8 from Arabidopsis thaliana (Mouse-ear cress).